A 780-amino-acid chain; its full sequence is Potassium/sodium hyperpolarization-activated cyclic nucleotide-gated channel 3 (780 aa).

Positions 1 to 47 (MEEEARPAVGDGEAATPARETPPAAPAQARAASGGVPESAPEPKRRQ) are disordered. At 1–96 (MEEEARPAVG…PYSDFRFYWD (96 aa)) the chain is on the cytoplasmic side. Positions 13 to 32 (EAATPARETPPAAPAQARAA) are enriched in low complexity. The tract at residues 45 to 90 (RRQLGTLLQPTVNKFSLRVFGSHKAVEIEQERVKSAGAWIIHPYSD) is involved in subunit assembly. The chain crosses the membrane as a helical span at residues 97–117 (LIMLLLMVGNLIVLPVGITFF). Residues 118–123 (KEENSP) lie on the Extracellular side of the membrane. A helical transmembrane segment spans residues 124–144 (PWIVFNVLSDTFFLLDLVLNF). Topologically, residues 145–170 (RTGIVVEEGAEILLAPRAIRTRYLRT) are cytoplasmic. The chain crosses the membrane as a helical span at residues 171 to 191 (WFLVDLISSIPVDYIFLVVEL). Topologically, residues 192–200 (EPRLDAEVY) are extracellular. The chain crosses the membrane as a helical; Voltage-sensor span at residues 201–221 (KTARALRIVRFTKILSLLRLL). Over 222–252 (RLSRLIRYMHQWEEIFHMTYDLASAVVRIFN) the chain is Cytoplasmic. Residues 253 to 273 (LIGMMLLLCHWDGCLQFLVPM) form a helical membrane-spanning segment. Residues 274–296 (LQDFPSDCWVSMNRMVNHSWGRQ) are Extracellular-facing. Residue Asn290 is glycosylated (N-linked (GlcNAc...) asparagine). Positions 297-318 (YSHALFKAMSHMLCIGYGQQAP) form an intramembrane region, pore-forming. Residues 319-328 (VGMPDVWLTM) are Extracellular-facing. The chain crosses the membrane as a helical span at residues 329–349 (LSMIVGATCYAMFIGHATALI). Over 350 to 780 (QSLDSSRRQY…PRGPQISANM (431 aa)) the chain is Cytoplasmic. An interaction with KCTD3 region spans residues 353–780 (DSSRRQYQEK…PRGPQISANM (428 aa)). 3',5'-cyclic AMP-binding residues include Gly491, Glu492, Cys494, Arg501, Thr502, Arg542, and Arg545. Residues 549–569 (KNSILQRKRSEPSPGSSSGGV) form a disordered region. Ser634 carries the phosphoserine modification. Over residues 687–698 (ASLSRTGRSQVS) the composition is skewed to polar residues. The disordered stretch occupies residues 687–780 (ASLSRTGRSQ…PRGPQISANM (94 aa)).

It belongs to the potassium channel HCN family. In terms of assembly, homotetramer. The potassium channel is composed of a homo- or heterotetrameric complex of pore-forming subunits. Interacts with HCN1. Interacts with KCTD3; this interaction increases cell surface expression and current density of this channel. Interacts with PEX5L.

It localises to the cell membrane. It carries out the reaction K(+)(in) = K(+)(out). The catalysed reaction is Na(+)(in) = Na(+)(out). Inhibited by Cs(1+) and ivabradine. Unlike HCN2 and HCN4, HCN3 is insensitive to cyclic nucleotides, such as cAMP or cGMP. This lack of sensitivity of HCN3, despite harboring a functional cyclic nucleotide-binding domain (CNBD), may be explained by its shorter C-terminal sequence, which may alter the normal autoinhibition of the channel. Phosphatidylinositol-4,5-bisphosphate (PIP(2)) shifts HCN3 activation to more depolarized potentials and accelerated activation kinetics. Functionally, hyperpolarization-activated ion channel that are permeable to sodium and potassium ions, with an about 3:1 preference for potassium ions. Contributes to the native pacemaker currents in heart (If) and in neurons (Ih). In particular, plays a pivotal role in maintaining excitability and promoting rhythmic burst firing within hypothalamic nuclei. Exerts a significant influence on the configuration of the cardiac action potential waveform. Does not appear to play a prominent role in the processing of acute, neuropathic, or inflammatory pain. This is Potassium/sodium hyperpolarization-activated cyclic nucleotide-gated channel 3 (Hcn3) from Rattus norvegicus (Rat).